The chain runs to 202 residues: Virulence protein F (202 aa).

Positions 1–15 are enriched in polar residues; the sequence is MRNSSLRDASGSNDA. A disordered region spans residues 1–21; sequence MRNSSLRDASGSNDAQVPHKT. Residues 20-42 enclose the F-box domain; the sequence is KTELLNLPDHVLTEVAKRLATNN.

As to quaternary structure, component of SCF(virF) E3 ubiquitin ligase complexes. Interacts with host VIP1 and SKP1A. Interacts with Arabidopsis thaliana ENAP1/VFP3 and VFP5 in the host cell nucleus.

It is found in the host nucleus. Functionally, in the host plant, component of SCF(virF) E3 ubiquitin ligase complexes, which mediate the ubiquitination and subsequent proteasomal degradation of target proteins such as the host VIP1, after its implication in T-DNA translocation to the host nucleus. Required for the formation of tumors of a wild-type size on certain plant species only. This is Virulence protein F from Agrobacterium tumefaciens (strain 15955).